We begin with the raw amino-acid sequence, 180 residues long: NADH-quinone oxidoreductase subunit I (180 aa).

4Fe-4S ferredoxin-type domains follow at residues 48–80 and 90–119; these read IVLT…LQKS and EFFR…LTPD. [4Fe-4S] cluster is bound by residues cysteine 60, cysteine 63, cysteine 66, cysteine 70, cysteine 99, cysteine 102, cysteine 105, and cysteine 109. Residues 161 to 174 show a composition bias toward basic and acidic residues; sequence KPKGDAENEAKPID. Residues 161 to 180 form a disordered region; it reads KPKGDAENEAKPIDVKSLLP.

The protein belongs to the complex I 23 kDa subunit family. NDH-1 is composed of 13 different subunits. Subunits NuoA, H, J, K, L, M, N constitute the membrane sector of the complex. Requires [4Fe-4S] cluster as cofactor.

Its subcellular location is the cell inner membrane. It catalyses the reaction a quinone + NADH + 5 H(+)(in) = a quinol + NAD(+) + 4 H(+)(out). Functionally, NDH-1 shuttles electrons from NADH, via FMN and iron-sulfur (Fe-S) centers, to quinones in the respiratory chain. The immediate electron acceptor for the enzyme in this species is believed to be ubiquinone. Couples the redox reaction to proton translocation (for every two electrons transferred, four hydrogen ions are translocated across the cytoplasmic membrane), and thus conserves the redox energy in a proton gradient. This is NADH-quinone oxidoreductase subunit I from Shewanella oneidensis (strain ATCC 700550 / JCM 31522 / CIP 106686 / LMG 19005 / NCIMB 14063 / MR-1).